The following is a 2101-amino-acid chain: General transcription factor 3C polypeptide 1 (2101 aa).

A compositionally biased stretch (acidic residues) spans 473 to 487 (GEEAFLSDSESEEES). Disordered regions lie at residues 473-574 (GEEA…MDSH) and 588-609 (NPKEGGGSQKGGRHGSSQDKPH). A compositionally biased stretch (basic residues) spans 492-503 (GKRRGRGSRGHA). Residues 504–513 (RASGDAGSGS) are compositionally biased toward low complexity. Lys534 participates in a covalent cross-link: Glycyl lysine isopeptide (Lys-Gly) (interchain with G-Cter in SUMO2). Ser667 carries the post-translational modification Phosphoserine. 2 disordered regions span residues 718–772 (STAN…EKMG) and 820–864 (GEQP…SSWE). A compositionally biased stretch (polar residues) spans 747–759 (RSANSDPNTSSKP). Basic and acidic residues-rich tracts occupy residues 760-771 (ESTRVKKTDEKM) and 826-836 (HSERKTGKQES). Glycyl lysine isopeptide (Lys-Gly) (interchain with G-Cter in SUMO2) cross-links involve residues Lys770 and Lys833. Ser1063 bears the Phosphoserine mark. The span at 1186–1196 (EEQFELDREPT) shows a compositional bias: basic and acidic residues. Disordered stretches follow at residues 1186 to 1239 (EEQF…KKLR), 1598 to 1627 (KSLGKDGGLDDDEEEEDLDEGSGTKRQGVE), and 1822 to 1923 (DTKA…QENQ). Thr1196 carries the post-translational modification Phosphothreonine. Residues 1199–1215 (RNRKVRGGKSQKRKRLK) show a composition bias toward basic residues. The span at 1229–1239 (EHPEAKSKKLR) shows a compositional bias: basic and acidic residues. Over residues 1606 to 1617 (LDDDEEEEDLDE) the composition is skewed to acidic residues. Residues 1822–1831 (DTKASGDDSQ) show a composition bias toward basic and acidic residues. Phosphoserine occurs at positions 1854 and 1890. A compositionally biased stretch (low complexity) spans 1900 to 1910 (EAQAPAQLAAP).

It belongs to the TFIIIC subunit 1 family. Part of the TFIIIC subcomplex TFIIIC2, consisting of six subunits, GTF3C1, GTF3C2, GTF3C3, GTF3C4, GTF3C5 and GTF3C6. Interacts with IGHMBP2. Interacts with MAF1.

It localises to the nucleus. Its function is as follows. Required for RNA polymerase III-mediated transcription. Component of TFIIIC that initiates transcription complex assembly on tRNA and is required for transcription of 5S rRNA and other stable nuclear and cytoplasmic RNAs. Binds to the box B promoter element. This Mus musculus (Mouse) protein is General transcription factor 3C polypeptide 1 (Gtf3c1).